Here is a 49-residue protein sequence, read N- to C-terminus: Large ribosomal subunit protein bL33B (49 aa).

It belongs to the bacterial ribosomal protein bL33 family.

In Shouchella clausii (strain KSM-K16) (Alkalihalobacillus clausii), this protein is Large ribosomal subunit protein bL33B.